The chain runs to 204 residues: uncharacterized protein (204 aa).

Residues 1 to 24 (MPINTFCKISLFICALFCSTVTLA) form the signal peptide.

This is an uncharacterized protein from Pasteurella multocida (strain Pm70).